Here is a 407-residue protein sequence, read N- to C-terminus: Aminomethyltransferase, mitochondrial (407 aa).

The transit peptide at 1 to 29 directs the protein to the mitochondrion; that stretch reads MRGGLWQLGQSITRRLGQSDKKTIVRRCY. The substrate site is built by Glu-234, Arg-265, and Tyr-403.

It belongs to the GcvT family. As to quaternary structure, the glycine cleavage system is composed of four proteins: P, T, L and H.

The protein resides in the mitochondrion. The catalysed reaction is N(6)-[(R)-S(8)-aminomethyldihydrolipoyl]-L-lysyl-[protein] + (6S)-5,6,7,8-tetrahydrofolate = N(6)-[(R)-dihydrolipoyl]-L-lysyl-[protein] + (6R)-5,10-methylene-5,6,7,8-tetrahydrofolate + NH4(+). In terms of biological role, the glycine cleavage system catalyzes the degradation of glycine. The chain is Aminomethyltransferase, mitochondrial (GDCST) from Flaveria anomala (Yellowtops).